The primary structure comprises 306 residues: tRNA dimethylallyltransferase (306 aa).

9–16 lines the ATP pocket; it reads GPTAVGKT. Substrate is bound at residue 11–16; it reads TAVGKT. An interaction with substrate tRNA region spans residues 34–37; that stretch reads DSRQ.

This sequence belongs to the IPP transferase family. In terms of assembly, monomer. It depends on Mg(2+) as a cofactor.

It carries out the reaction adenosine(37) in tRNA + dimethylallyl diphosphate = N(6)-dimethylallyladenosine(37) in tRNA + diphosphate. Catalyzes the transfer of a dimethylallyl group onto the adenine at position 37 in tRNAs that read codons beginning with uridine, leading to the formation of N6-(dimethylallyl)adenosine (i(6)A). The polypeptide is tRNA dimethylallyltransferase (Roseiflexus castenholzii (strain DSM 13941 / HLO8)).